The sequence spans 860 residues: Leucine--tRNA ligase (860 aa).

The 'HIGH' region motif lies at 42-52; the sequence is PYPSGRLHMGH. Residues 619–623 carry the 'KMSKS' region motif; the sequence is KMSKS. Lys-622 contributes to the ATP binding site.

It belongs to the class-I aminoacyl-tRNA synthetase family.

It is found in the cytoplasm. It carries out the reaction tRNA(Leu) + L-leucine + ATP = L-leucyl-tRNA(Leu) + AMP + diphosphate. The sequence is that of Leucine--tRNA ligase from Photorhabdus laumondii subsp. laumondii (strain DSM 15139 / CIP 105565 / TT01) (Photorhabdus luminescens subsp. laumondii).